We begin with the raw amino-acid sequence, 524 residues long: Probable malate:quinone oxidoreductase (524 aa).

This sequence belongs to the MQO family. FAD is required as a cofactor.

It catalyses the reaction (S)-malate + a quinone = a quinol + oxaloacetate. The protein operates within carbohydrate metabolism; tricarboxylic acid cycle; oxaloacetate from (S)-malate (quinone route): step 1/1. This Blochmanniella floridana protein is Probable malate:quinone oxidoreductase.